The sequence spans 96 residues: uncharacterized protein (96 aa).

This is an uncharacterized protein from Homo sapiens (Human).